The sequence spans 935 residues: Transmembrane channel-like protein 1 (935 aa).

Disordered regions lie at residues 1-21 (MPRH…DEGK) and 37-204 (ERGK…LGSL). Basic and acidic residues-rich tracts occupy residues 37-47 (ERGKIKQASRD), 54-79 (RNGE…EKKH), 109-136 (DKSS…EKDV), 152-163 (NHEKTKQHLKEE), and 172-184 (PETT…KSES). Helical transmembrane passes span 303 to 340 (SSVA…MGKP), 392 to 423 (RMPL…ANEE), 480 to 510 (LTRF…VRRS), 523 to 550 (WWER…ISTL), 555 to 589 (PRIA…QLKR), 633 to 670 (WETM…VRFL), 690 to 710 (VSGN…GAFY), 714 to 736 (LPAL…VMCC), 751 to 774 (NFYM…TIVS), and 818 to 851 (LVLP…KKKL). Over residues 874–886 (EQARKAGEQRRNS) the composition is skewed to basic and acidic residues. The segment at 874–935 (EQARKAGEQR…QQPQKNSKKR (62 aa)) is disordered. Composition is skewed to polar residues over residues 899–919 (SHVS…TSSG) and 926–935 (QQPQKNSKKR).

The protein belongs to the TMC family. Interacts specifically with isoform CD3 of PCDH15A (via cytoplasmic domain). As to expression, in adults, expression is restricted to the hair cells of inner ear and lateral line organ. Expressed at higher levels in the larval lateral-line neuromasts than in the larval inner ear. Expressed in the sensory hair cell patches of the ear at 4 days post fertilization (dpf).

It localises to the cell membrane. It carries out the reaction Ca(2+)(in) = Ca(2+)(out). In terms of biological role, pore-forming subunit of the mechanotransducer (MET) non-selective cation channel complex located at the tips of hair-cell stereocilia. Highly permeable to calcium and likely transports monovalent cations. The polypeptide is Transmembrane channel-like protein 1 (Danio rerio (Zebrafish)).